A 1011-amino-acid chain; its full sequence is DNA-directed RNA polymerase 2, chloroplastic/mitochondrial (1011 aa).

Positions 307–326 are disordered; sequence KGDDNEESGGVENETSMKEQ. Catalysis depends on residues Asp712, Lys787, and Asp944.

Belongs to the phage and mitochondrial RNA polymerase family. Interacts with NIP1 and NIP2.

Its subcellular location is the plastid. It localises to the chloroplast. The protein resides in the mitochondrion. It catalyses the reaction RNA(n) + a ribonucleoside 5'-triphosphate = RNA(n+1) + diphosphate. In terms of biological role, DNA-dependent RNA polymerase catalyzes the transcription of DNA into RNA using the four ribonucleoside triphosphates as substrates. The chain is DNA-directed RNA polymerase 2, chloroplastic/mitochondrial (RPOT2) from Arabidopsis thaliana (Mouse-ear cress).